The sequence spans 932 residues: MPCLARLLDLADVSDSSSKANGSNPIGADRSAQLPAAWDPAAVEENLYQGWVDSGYFKADPSSDKPPFSIVLPPPNVTGQLHMGHALDHTLMDAMARRKRMQGFEVLWLPGSDHAGIATQTKVEANLKETEGKDRFDYGRDAFVGKVWEWKDRYGGVIQRQMRAIGDSVDWSRERFTLDDGLSRAVQTMFKELFDAGLIYRANRMVNWSPVLQTAISDIEVVYSDDEGELVSIRYGSLEDSEPHVVVATTRVETMLGDVAVAVHPEDERYTDLVGKSLPHPFLPDRQMIVVADDYVDPEFGTGAVKITPAHDPNDFAMGQRHDLPMPVIMDETGHIANTGTEFDGMERYEAREKIRLALEEQGRIVARKFPYVHSVGHSERSKEAVEPRLSEQWFVKVEELAKMSGDAIRSGDSVIHPSSQEPRWFDWVDDMHDWCISRQLWWGHRIPIWYGPNGEIVCCGPDDEAPTGEGWYQDEDVLDTWFSSALWPFSTMGWPEKTPELEKFYPTSVLVTGYDILFFWVARMMMFATFASKHTPEILGTGKDGRPQIPFNDIFLHGLVRDEHGRKMSKSLGNGIDPMDWVRDYGADALRFTLARGANPGSDLPVGEDAAQSSRNFATKLYNATKFALMNGARVGELPARETLTDADRWILDRLEEVRQLVDDALDRYEFSLANENLYRFAWGEFCDWYLEIAKVQIPRDWDSATEEQVQRGIRTQIVLGRVLDSVLRLLHPAMPFVTETLWKALTDGEEGYSESLVTADWPTADLTNGGAQTDADAVRRMADVDKLVTELRRFRSDQGVKPSQKVPAKLDFAAADLANFEEAVRSLVRLETPEEDFAETASIEVRLSQATIAVQLDTSGTVDVAAERKRLEKDLAAAQKELDNAAKKLGNENFLAKAPEKVVEGIRERQRVAQEEFERITARLEGLPKA.

Positions 75-85 (PNVTGQLHMGH) match the 'HIGH' region motif. Positions 568–572 (KMSKS) match the 'KMSKS' region motif. An ATP-binding site is contributed by lysine 571. Positions 863–929 (TVDVAAERKR…ERITARLEGL (67 aa)) form a coiled coil.

It belongs to the class-I aminoacyl-tRNA synthetase family. ValS type 1 subfamily. In terms of assembly, monomer.

Its subcellular location is the cytoplasm. The enzyme catalyses tRNA(Val) + L-valine + ATP = L-valyl-tRNA(Val) + AMP + diphosphate. In terms of biological role, catalyzes the attachment of valine to tRNA(Val). As ValRS can inadvertently accommodate and process structurally similar amino acids such as threonine, to avoid such errors, it has a 'posttransfer' editing activity that hydrolyzes mischarged Thr-tRNA(Val) in a tRNA-dependent manner. This Corynebacterium jeikeium (strain K411) protein is Valine--tRNA ligase.